Reading from the N-terminus, the 227-residue chain is Thymidylate kinase (227 aa).

16–23 is an ATP binding site; the sequence is GIDGAGKT.

It belongs to the thymidylate kinase family.

The catalysed reaction is dTMP + ATP = dTDP + ADP. Its function is as follows. Phosphorylation of dTMP to form dTDP in both de novo and salvage pathways of dTTP synthesis. The chain is Thymidylate kinase from Xanthomonas campestris pv. campestris (strain 8004).